A 102-amino-acid polypeptide reads, in one-letter code: Major basic nuclear protein 2 (102 aa).

Positions 1–11 (MKAMKATKKAM) are enriched in basic residues. Positions 1–43 (MKAMKATKKAMTKTGLAEALAPKPSSARRIAPPSSRAWPPSAQ) are disordered. Residues 21–42 (APKPSSARRIAPPSSRAWPPSA) show a composition bias toward low complexity.

It localises to the nucleus. The polypeptide is Major basic nuclear protein 2 (HCc2) (Crypthecodinium cohnii (Dinoflagellate)).